The sequence spans 143 residues: Spore coat protein P (143 aa).

Positions 34–143 (FFDSEASTFV…VETVAFNKGL (110 aa)) constitute a sHSP domain.

Belongs to the small heat shock protein (HSP20) family.

This is Spore coat protein P (cotP) from Bacillus subtilis (strain 168).